A 167-amino-acid polypeptide reads, in one-letter code: MSEYTTEADTVEDITESDEFTGTYTSESSTPATGGNSIIAPGGATGRRKEAVARVRIVPGTGKWTINGRELDNYFPNKVHQQLVNEPFRVTALEGSFDVIARIHGGGSSGQAGALRLGVARALNAIDLEANRPQLKKAGFLTRDPRATERKKAGLKKARKAPQFSKR.

Disordered stretches follow at residues M1–T45 and K137–R167. Over residues D9–E19 the composition is skewed to acidic residues. The segment covering F20–N36 has biased composition (polar residues). The span at R143–K152 shows a compositional bias: basic and acidic residues. Residues A153 to R167 are compositionally biased toward basic residues.

It belongs to the universal ribosomal protein uS9 family.

This Kineococcus radiotolerans (strain ATCC BAA-149 / DSM 14245 / SRS30216) protein is Small ribosomal subunit protein uS9.